The primary structure comprises 185 residues: Elongation factor P (185 aa).

It belongs to the elongation factor P family.

The protein localises to the cytoplasm. It functions in the pathway protein biosynthesis; polypeptide chain elongation. Functionally, involved in peptide bond synthesis. Stimulates efficient translation and peptide-bond synthesis on native or reconstituted 70S ribosomes in vitro. Probably functions indirectly by altering the affinity of the ribosome for aminoacyl-tRNA, thus increasing their reactivity as acceptors for peptidyl transferase. The sequence is that of Elongation factor P from Thermosynechococcus vestitus (strain NIES-2133 / IAM M-273 / BP-1).